Consider the following 111-residue polypeptide: Large ribosomal subunit protein uL22 (111 aa).

The protein belongs to the universal ribosomal protein uL22 family. As to quaternary structure, part of the 50S ribosomal subunit.

Its function is as follows. This protein binds specifically to 23S rRNA; its binding is stimulated by other ribosomal proteins, e.g. L4, L17, and L20. It is important during the early stages of 50S assembly. It makes multiple contacts with different domains of the 23S rRNA in the assembled 50S subunit and ribosome. Functionally, the globular domain of the protein is located near the polypeptide exit tunnel on the outside of the subunit, while an extended beta-hairpin is found that lines the wall of the exit tunnel in the center of the 70S ribosome. This chain is Large ribosomal subunit protein uL22, found in Chlamydia abortus (strain DSM 27085 / S26/3) (Chlamydophila abortus).